Reading from the N-terminus, the 494-residue chain is Alpha-amylase (494 aa).

A signal peptide spans 1–26 (MQISKAALLASLAALVYAQPVTLFKR). Cys-57 and Cys-65 form a disulfide bridge. Substrate is bound at residue Trp-110. Asn-148 is a Ca(2+) binding site. Residue His-149 participates in substrate binding. Cys-177 and Cys-191 are disulfide-bonded. Residue Asp-202 participates in Ca(2+) binding. Asn-224 carries N-linked (GlcNAc...) asparagine glycosylation. Arg-231 serves as a coordination point for substrate. Ca(2+) is bound by residues Asp-233, His-237, and Glu-257. Residue Asp-233 is the Nucleophile of the active site. Residue 236 to 237 (KH) coordinates substrate. Glu-257 acts as the Proton donor in catalysis. Position 261 (Gly-261) interacts with substrate. Cys-267 and Cys-310 are oxidised to a cystine. Substrate-binding residues include Asp-324 and Arg-371. A disulfide bond links Cys-462 and Cys-493.

This sequence belongs to the glycosyl hydrolase 13 family. Requires Ca(2+) as cofactor.

It is found in the secreted. The enzyme catalyses Endohydrolysis of (1-&gt;4)-alpha-D-glucosidic linkages in polysaccharides containing three or more (1-&gt;4)-alpha-linked D-glucose units.. The chain is Alpha-amylase (ALP1) from Saccharomycopsis fibuligera (Yeast).